A 92-amino-acid polypeptide reads, in one-letter code: Protein S100-B (92 aa).

Position 2 is a blocked amino end (Ser); alternate (Ser-2). Position 2 is an N-acetylserine; alternate (Ser-2). EF-hand domains are found at residues 13–48 (DVFH…LEEI) and 49–84 (KEQE…VTTA). Zn(2+) is bound at residue His-16. Ca(2+)-binding residues include Ser-19, Glu-22, and Asp-24. His-26 serves as a coordination point for Zn(2+). Residues Lys-27, Glu-32, Asp-62, Asp-64, Asp-66, Glu-68, and Glu-73 each contribute to the Ca(2+) site. Positions 86 and 91 each coordinate Zn(2+).

It belongs to the S-100 family. In terms of assembly, dimer of either two alpha chains, or two beta chains, or one alpha and one beta chain. The S100B dimer binds two molecules of STK38. Interacts with CACYBP in a calcium-dependent manner. Interacts with ATAD3A; this interaction probably occurs in the cytosol prior to ATAD3A mitochondrial targeting. Interacts with S100A6. The S100B dimer interacts with two molecules of CAPZA1. Interacts with AGER. Interacts with PPP5C (via TPR repeats); the interaction is calcium-dependent and modulates PPP5C activity. Interacts with TPPP; this interaction inhibits TPPP dimerization. Interacts with isoform CLSTN3beta of CLSTN3; interaction promotes secretion. As to expression, although predominant among the water-soluble brain proteins, S100 is also found in a variety of other tissues.

It localises to the cytoplasm. It is found in the nucleus. The protein localises to the secreted. Its function is as follows. Small zinc- and- and calcium-binding protein that is highly expressed in astrocytes and constitutes one of the most abundant soluble proteins in brain. Weakly binds calcium but binds zinc very tightly-distinct binding sites with different affinities exist for both ions on each monomer. Physiological concentrations of potassium ion antagonize the binding of both divalent cations, especially affecting high-affinity calcium-binding sites. Acts as a neurotrophic factor that promotes astrocytosis and axonal proliferation. Involved in innervation of thermogenic adipose tissue by acting as an adipocyte-derived neurotrophic factor that promotes sympathetic innervation of adipose tissue. Binds to and initiates the activation of STK38 by releasing autoinhibitory intramolecular interactions within the kinase. Interaction with AGER after myocardial infarction may play a role in myocyte apoptosis by activating ERK1/2 and p53/TP53 signaling. Could assist ATAD3A cytoplasmic processing, preventing aggregation and favoring mitochondrial localization. May mediate calcium-dependent regulation on many physiological processes by interacting with other proteins, such as TPR-containing proteins, and modulating their activity. This Homo sapiens (Human) protein is Protein S100-B.